Consider the following 491-residue polypeptide: 2,3-bisphosphoglycerate-independent phosphoglycerate mutase (491 aa).

The Mn(2+) site is built by Asp11 and Ser61. The active-site Phosphoserine intermediate is Ser61. Residues His118, 147-148, Arg177, Arg183, 248-251, and Lys320 contribute to the substrate site; these read RD and RSDR. Mn(2+) contacts are provided by Asp386, His390, Asp427, His428, and His445.

The protein belongs to the BPG-independent phosphoglycerate mutase family. Monomer. Mn(2+) serves as cofactor.

The catalysed reaction is (2R)-2-phosphoglycerate = (2R)-3-phosphoglycerate. It participates in carbohydrate degradation; glycolysis; pyruvate from D-glyceraldehyde 3-phosphate: step 3/5. Catalyzes the interconversion of 2-phosphoglycerate and 3-phosphoglycerate. The sequence is that of 2,3-bisphosphoglycerate-independent phosphoglycerate mutase from Aliarcobacter butzleri (strain RM4018) (Arcobacter butzleri).